The following is a 325-amino-acid chain: MSHSLRVVFAGTPDFAAASLLALLDSRHQVVAAYTQPDRPAGRGRKLTPSPVKALAQEHGLPVHQPTSLKDTDAQQTLAALEADVLVVVAYGLILPQAVLDIPRLGCLNVHASLLPRWRGAAPIQRAIEAGDTRSGVTIMQMDAGLDTGAMLLVRETPITATTTGGELHDRLAPLGGEAIVEALDALATDGLTATPQPSEGVTYAAKLSKAEAELDFTRPAHELAARVRAFNPWPVAWTRLAGEPLRLWLAEAEAEAERPGVAPGTLLQSAPDALRIACGHDGTQVVRITRAQLPGGKPLAVRDLLNARGERFPEGLRLGQEDRA.

Ser-113 to Pro-116 provides a ligand contact to (6S)-5,6,7,8-tetrahydrofolate.

It belongs to the Fmt family.

It catalyses the reaction L-methionyl-tRNA(fMet) + (6R)-10-formyltetrahydrofolate = N-formyl-L-methionyl-tRNA(fMet) + (6S)-5,6,7,8-tetrahydrofolate + H(+). In terms of biological role, attaches a formyl group to the free amino group of methionyl-tRNA(fMet). The formyl group appears to play a dual role in the initiator identity of N-formylmethionyl-tRNA by promoting its recognition by IF2 and preventing the misappropriation of this tRNA by the elongation apparatus. The polypeptide is Methionyl-tRNA formyltransferase (Chromohalobacter salexigens (strain ATCC BAA-138 / DSM 3043 / CIP 106854 / NCIMB 13768 / 1H11)).